The following is a 24-amino-acid chain: Outer membrane protein (24 aa).

Belongs to the Gram-negative porin family. In terms of assembly, homotrimer.

It localises to the cell outer membrane. In terms of biological role, forms pores that allow passive diffusion of small molecules across the outer membrane. The polypeptide is Outer membrane protein (Sodalis glossinidius).